Consider the following 2820-residue polypeptide: MAAHRPVEWVQAVVSRFDEQLPIKTGQQNTHTKVSTEHNKECLINISKYKFSLVISGLTTILKNVNNMRIFGEAAEKNLYLSQLIILDTLEKCLAGQPKDTMRLDETMLVKQLLPEICHFLHTCREGNQHAAELRNSASGVLFSLSCNNFNAVFSRISTRLQELTVCSEDNVDVHDIELLQYINVDCAKLKRLLKETAFKFKALKKVAQLAVINSLEKAFWNWVENYPDEFTKLYQIPQTDMAECAGKLFDLVDGFAESTKRKAAVWPLQIILLILCPEIIQDISRDVVDENNTNKKLFLDSLRKALAGHGGSRQLTESAAIACVKLCKASTYINWEDNSVIFLLVQSMVVDLKNLLFNPSKPFSRGSQPADVDLMIDCLVSCFRISPHNNQHFKICLAQNSPSTFHYVLVNSLHRIITNSAWDWWPKIDAVYCHSVELRNMFGETLHKAVQGCGAHPALRMAPSLTFKEKVTSLKFKEKPTDLEARSYKYLLLSMVKLIHADPKLLLCNPRKQGPETQGSTAELITGLVQLVPQSHMPEVAQEAMEALLVLHQLDSIDLWNPDAPVETFWEISSQMLFYICKKLTSHQMLSSTEILKWLREILICRNKFLLKNKQADRSSCHSLYLYGVGCDLPASGNVTQMSVDHEESLRTCAPGASLRKGRGNSSMDSTAGCSGTPPICRQAQTKLEVALYMFLWSPDTEVVLVAMSCFRHLCEEADIRCGVDEVSVHNFLPNYNTFMEFASVSNMLSTGRAALQKRVMALLRRIEHPTAGNTEAWEDTHAKWEQATKLILNYPKAKMEDGQAAESLHKTIVKRRMSHVSGGGSIDLSDTDSLQEWINMTGFLCALGGVCLQQRSSSGLATYSPPMGPVSERKGSMISVMSSEGNVDSPVSRFMDRLLSLMVCNHEKVGLQIRTNVKDLVGLELSPALYPMLFNKLKSAISKFFDSQGQVLLTDSNTQFVEQTIAIMKNLLDNHTEGSSEHLGQASIETMMLNLVRYVRVLGNMVHAIQIKTKLCQLVEVMMARRDDLSFCQEMKFRNKMVEYLTDWVMGTSNQAADDDVKCLTRDLDQASMEAVVSLLAGLPLQPEEGDGVELMEAKSQLFLKYFTLFMNLLNDCSEVEDENAQTGGRKRGMSRRLASLRHCTVLAMSNLLNANVDSGLMHSIGLGYHKDLQTRATFMEVLTKILQQGTEFDTLAETVLADRFERLVELVTMMGDQGELPIAMALANVVPCSQWDELARVLVTLFDSRHLLYQLLWNMFSKEVELADSMQTLFRGNSLASKIMTFCFKVYGATYLQKLLDPLLRIIITSSDWQHVSFEVDPTRLEPSESLEENQRNLLQMTEKFFHAIISSSSEFPSQLRSVCHCLYQVVSQRFPQNSIGAVGSAMFLRFINPAIVSPYEAGILDKKPPPRIERGLKLMSKVLQSIANHVLFTKEEHMRPFNDFVKSNFDLARRFFLDIASDCPTSDAVNHSLSFISDGNVLALHRLLWNNQEKIGQYLSSNRDHKAVGRRPFDKMATLLAYLGPPEHKPVADTHWSSLNLTSSKFEEFMTRHQVHEKEEFKALKTLSIFYQAGTSKAGNPIFYYVARRFKTGQINGDLLIYHVLLTLKPYYAKPYEIVVDLTHTGPSNRFKTDFLSKWFVVFPGFAYDNVSAVYIYNCNSWVREYTKYHERLLTGLKGSKRLIFIDCPGKLAEHIEHEQQKLPAATLALEEDLKVFHNALKLAHKDTKVSIKVGSTAVQVTSAERTKVLGQSVFLNDIYYASEIEEICLVDENQFTLTIANQGTPLTFMHQECEAIVQSIIHIRTRWELSQPDSIPQHTKIRPKDVPGTLLNIALLNLGSSDPSLRSAAYNLLCALTCTFNLKIEGQLLETSGLCIPANNTLFIVSISKTLAANEPHLTLEFLEECISGFSKSSIELKHLCLEYMTPWLSNLVRFCKHNDDAKRQRVTAILDKLITMTINEKQMYPSIQAKIWGSLGQITDLLDVVLDSFIKTSATGGLGSIKAEVMADTAVALASGNVKLVSSKVIGRMCKIIDKTCLSPTPTLEQHLMWDDIAILARYMLMLSFNNSLDVAAHLPYLFHVVTFLVATGPLSLRASTHGLVINIIHSLCTCSQLHFSEETKQVLRLSLTEFSLPKFYLLFGISKVKSAAVIAFRSSYRDRSFSPGSYERETFALTSLETVTEALLEIMEACMRDIPTCKWLDQWTELAQRFAFQYNPSLQPRALVVFGCISKRVSHGQIKQIIRILSKALESCLKGPDTYNSQVLIEATVIALTKLQPLLNKDSPLHKALFWVAVAVLQLDEVNLYSAGTALLEQNLHTLDSLRIFNDKSPEEVFMAIRNPLEWHCKQMDHFVGLNFNSNFNFALVGHLLKGYRHPSPAIVARTVRILHTLLTLVNKHRNCDKFEVNTQSVAYLAALLTVSEEVRSRCSLKHRKSLLLTDISMENVPMDTYPIHHGDPSSRTLKETQPWSSPRGSEGYLAATYPAVGQTSPRARKSMSLDMGQPSQANTKKLLGTRKSFDHLISDTKAPKRQEMESGITTPPKMRRVAETDYEMETQRISSSQQHPHLRKVSVSESNVLLDEEVLTDPKIQALLLTVLATLVKYTTDEFDQRILYEYLAEASVVFPKVFPLVHNLLDSKINTLLSLCQDPNLLNPIHGIVQSVVYHEESPPQYQTSYLQSFGFNGLWRFAGPFSKQTQIPDYAELIVKFLDALIDTYLPGIDEETSEESLLTPTSPYPPALQSQLSITANLNLSNSMTSLATSQHSPGIDKENVELSPTTGHCNSGRTRHGSASQVQKQRSAGSFKRNSIKKIV.

At A2 the chain carries N-acetylalanine. S866 and S878 each carry phosphoserine. The region spanning H1253 to I1463 is the Ras-GAP domain. The 159-residue stretch at E1561–K1719 folds into the CRAL-TRIO domain. Positions E1561–D1818 are lipid binding. Phosphoserine is present on residues S2169 and S2448. A disordered region spans residues Y2457–E2482. The span at P2458–K2470 shows a compositional bias: basic and acidic residues. At T2495 the chain carries Phosphothreonine. Phosphoserine is present on residues S2496, S2502, S2504, and S2524. Positions K2536 to R2552 match the Bipartite nuclear localization signal motif. Residue T2546 is modified to Phosphothreonine. Residues S2578, S2783, and S2798 each carry the phosphoserine modification. Residues T2768–V2820 are disordered. Polar residues predominate over residues L2782–A2808.

In terms of assembly, interacts with HTR6. Interacts with SPRED2. Ubiquitinated by RNF7/RBX2, leading to its degradation.

It is found in the nucleus. The protein localises to the nucleolus. It localises to the cell membrane. Its function is as follows. Stimulates the GTPase activity of Ras. NF1 shows greater affinity for Ras GAP, but lower specific activity. May be a regulator of Ras activity. This chain is Neurofibromin (Nf1), found in Rattus norvegicus (Rat).